Here is a 258-residue protein sequence, read N- to C-terminus: MKQYIVLACMCLAAAAMPASLQQSSSSSSSCTEEENKHHMGIDVIIKVTKQDQTPTNDKICQSVTEITESESDPDPEVESEDDSTSVEDVDPPTTYYSIIGGGLRMNFGFTKCPQIKSISESADGNTVNARLSSVSPGQGKDSPAITREEALAMIKDCEVSIDIRCSEEEKDSDIKTHPVLGSNISHKKVSYEDIIGSTIVDTKCVKNLEFSVRIGDMCKESSELEVKDGFKYVDGSASEGATDDTSLIDSTKLKACV.

The first 17 residues, 1–17, serve as a signal peptide directing secretion; the sequence is MKQYIVLACMCLAAAAM. Residues 65–93 are disordered; that stretch reads TEITESESDPDPEVESEDDSTSVEDVDPP. Residues 68 to 91 are compositionally biased toward acidic residues; the sequence is TESESDPDPEVESEDDSTSVEDVD.

This sequence belongs to the orthopoxvirus OPG001 family. Binds to host CC chemokines, such as RANTES/CCL5, MIP-1alpha/CCL3, MCP-1/CCL2 and eotaxin.

It localises to the secreted. Its function is as follows. Inhibits host immune defense by binding to host chemokines. Binds host CC chemokines (beta chemokines) such as RANTES with high affinity, but not CXC or C chemokines (alpha and gamma chemokines). This Homo sapiens (Human) protein is Chemokine-binding protein (OPG001).